A 435-amino-acid chain; its full sequence is Mitochondrial distribution and morphology protein 12 (435 aa).

The region spanning 1 to 435 (MSIEVDWGAA…VYPSFWTFLV (435 aa)) is the SMP-LTD domain. 2 disordered regions span residues 73–113 (DEDD…AINH) and 186–268 (WNDS…TSEE). The span at 96 to 113 (THPELNESSFRDDNAINH) shows a compositional bias: basic and acidic residues. The span at 218–238 (SSNPTSRPSTSSTLPSHPSGS) shows a compositional bias: low complexity. Basic and acidic residues predominate over residues 251 to 268 (HGSHPEEHGHLDDPTSEE).

The protein belongs to the MDM12 family. Component of the ER-mitochondria encounter structure (ERMES) or MDM complex, composed of mmm1, mdm10, mdm12 and mdm34. A mmm1 homodimer associates with one molecule of mdm12 on each side in a pairwise head-to-tail manner, and the SMP-LTD domains of mmm1 and mdm12 generate a continuous hydrophobic tunnel for phospholipid trafficking.

It is found in the mitochondrion outer membrane. Its subcellular location is the endoplasmic reticulum membrane. Component of the ERMES/MDM complex, which serves as a molecular tether to connect the endoplasmic reticulum (ER) and mitochondria. Components of this complex are involved in the control of mitochondrial shape and protein biogenesis, and function in nonvesicular lipid trafficking between the ER and mitochondria. Mdm12 is required for the interaction of the ER-resident membrane protein mmm1 and the outer mitochondrial membrane-resident beta-barrel protein mdm10. The mdm12-mmm1 subcomplex functions in the major beta-barrel assembly pathway that is responsible for biogenesis of all mitochondrial outer membrane beta-barrel proteins, and acts in a late step after the SAM complex. The mdm10-mdm12-mmm1 subcomplex further acts in the TOM40-specific pathway after the action of the mdm12-mmm1 complex. Essential for establishing and maintaining the structure of mitochondria and maintenance of mtDNA nucleoids. The protein is Mitochondrial distribution and morphology protein 12 of Aspergillus niger (strain ATCC MYA-4892 / CBS 513.88 / FGSC A1513).